A 117-amino-acid polypeptide reads, in one-letter code: MDLIKIAEEAFATGKQHPSFKAGDTITVAYRIVEGSKERVQLYRGVVIKIAGHGDKKRFTVRKMSGTVGVERIFPIESPAIDSITVNKVGKVRRAKLYYLRALTGKKARIQEKRVNQ.

This sequence belongs to the bacterial ribosomal protein bL19 family.

Functionally, this protein is located at the 30S-50S ribosomal subunit interface and may play a role in the structure and function of the aminoacyl-tRNA binding site. The protein is Large ribosomal subunit protein bL19 of Phocaeicola vulgatus (strain ATCC 8482 / DSM 1447 / JCM 5826 / CCUG 4940 / NBRC 14291 / NCTC 11154) (Bacteroides vulgatus).